We begin with the raw amino-acid sequence, 523 residues long: MSFRKEDGVSSLCQKALHIITELCFAGQVEWDKCSGIFPADRSGQGGGGTDISVSLLAVVVSFCGLALLVVSLFVFWKLCWPCWKSKLVAPNVSTLPQSISSAPTEVFETEEKKEVEENEKPAPKAIEPAIKISHTSPDIPAEVQTALKEHLIKHARVQRQTTDPTSSSRHNSFRRHLPRQMNVSSVDFSMGTEPVLQRGETRTSIGRIKPELYKQKSVDSEGNRKDDVKTCGKLNFALQYDYENELLVVKIIKALDLPAKDFTGTSDPYVKIYLLPDRKKKFQTRVHRKTLNPLFDELFQFPVVYDQLSNRKLHFSIYDFDRFSRHDMIGEVILDNLFEVSDLSREATVWKDIHCATTESIDLGEIMFSLCYLPTAGRMTLTVIKCRNLKAMDITGSSDPYVKVSLMCEGRRLKKRKTTTKKNTLNPVYNEAIIFDIPPENVDQVSLCIAVMDYDRVGHNEVIGVCRTGLDAEGLGRDHWNEMLAYHRKPITHWHPLLELPGRATSFDSQGSCSSPRPPSTP.

Residues 1–55 lie on the Vesicular side of the membrane; sequence MSFRKEDGVSSLCQKALHIITELCFAGQVEWDKCSGIFPADRSGQGGGGTDISVS. The cysteine motif stretch occupies residues 13–35; it reads CQKALHIITELCFAGQVEWDKCS. Residues 56–76 traverse the membrane as a helical segment; that stretch reads LLAVVVSFCGLALLVVSLFVF. Over 77-523 the chain is Cytoplasmic; the sequence is WKLCWPCWKS…CSSPRPPSTP (447 aa). Thr136 bears the Phosphothreonine mark. C2 domains lie at 231-352 and 363-496; these read TCGK…TVWK and DLGE…THWH. 11 residues coordinate Ca(2+): Asp262, Asp268, Asp320, Phe321, Asp322, Ser325, Asp328, Asp394, Asp400, Asp454, and Asp456.

The protein belongs to the synaptotagmin family. In terms of assembly, homodimer; disulfide-linked via the cysteine motif. Can also form heterodimers with SYT3, SYT6, SYT7 and SYT9. Ca(2+) serves as cofactor.

It is found in the cytoplasmic vesicle. The protein resides in the secretory vesicle membrane. In terms of biological role, ca(2+) sensor specifically required for the Ca(2+)-dependent exocytosis of secretory vesicles containing IGF1 in neurons of the olfactory bulb. Exocytosis of IGF1 is required for sensory perception of smell. Not involved in Ca(2+)-dependent synaptic vesicle exocytosis. Acts through Ca(2+) and phospholipid binding to the C2 domain: Ca(2+) induces binding of the C2-domains to phospholipid membranes and to assembled SNARE-complexes; both actions contribute to triggering exocytosis. This chain is Synaptotagmin-10 (Syt10), found in Rattus norvegicus (Rat).